An 87-amino-acid chain; its full sequence is Small ribosomal subunit protein uS15c (87 aa).

It belongs to the universal ribosomal protein uS15 family. In terms of assembly, part of the 30S ribosomal subunit.

The protein localises to the plastid. The protein resides in the chloroplast. The chain is Small ribosomal subunit protein uS15c (rps15) from Nicotiana tabacum (Common tobacco).